The primary structure comprises 880 residues: Alanine--tRNA ligase (880 aa).

Zn(2+) contacts are provided by histidine 563, histidine 567, cysteine 673, and histidine 677.

It belongs to the class-II aminoacyl-tRNA synthetase family. Zn(2+) serves as cofactor.

Its subcellular location is the cytoplasm. The catalysed reaction is tRNA(Ala) + L-alanine + ATP = L-alanyl-tRNA(Ala) + AMP + diphosphate. In terms of biological role, catalyzes the attachment of alanine to tRNA(Ala) in a two-step reaction: alanine is first activated by ATP to form Ala-AMP and then transferred to the acceptor end of tRNA(Ala). Also edits incorrectly charged Ser-tRNA(Ala) and Gly-tRNA(Ala) via its editing domain. The chain is Alanine--tRNA ligase from Caulobacter vibrioides (strain ATCC 19089 / CIP 103742 / CB 15) (Caulobacter crescentus).